A 258-amino-acid polypeptide reads, in one-letter code: Imidazole glycerol phosphate synthase subunit HisF (258 aa).

Residues D11 and D130 contribute to the active site.

This sequence belongs to the HisA/HisF family. As to quaternary structure, heterodimer of HisH and HisF.

Its subcellular location is the cytoplasm. The enzyme catalyses 5-[(5-phospho-1-deoxy-D-ribulos-1-ylimino)methylamino]-1-(5-phospho-beta-D-ribosyl)imidazole-4-carboxamide + L-glutamine = D-erythro-1-(imidazol-4-yl)glycerol 3-phosphate + 5-amino-1-(5-phospho-beta-D-ribosyl)imidazole-4-carboxamide + L-glutamate + H(+). It functions in the pathway amino-acid biosynthesis; L-histidine biosynthesis; L-histidine from 5-phospho-alpha-D-ribose 1-diphosphate: step 5/9. IGPS catalyzes the conversion of PRFAR and glutamine to IGP, AICAR and glutamate. The HisF subunit catalyzes the cyclization activity that produces IGP and AICAR from PRFAR using the ammonia provided by the HisH subunit. The polypeptide is Imidazole glycerol phosphate synthase subunit HisF (Xanthomonas euvesicatoria pv. vesicatoria (strain 85-10) (Xanthomonas campestris pv. vesicatoria)).